Consider the following 1342-residue polypeptide: DNA-directed RNA polymerase subunit beta (1342 aa).

The protein belongs to the RNA polymerase beta chain family. The RNAP catalytic core consists of 2 alpha, 1 beta, 1 beta' and 1 omega subunit. When a sigma factor is associated with the core the holoenzyme is formed, which can initiate transcription.

It carries out the reaction RNA(n) + a ribonucleoside 5'-triphosphate = RNA(n+1) + diphosphate. In terms of biological role, DNA-dependent RNA polymerase catalyzes the transcription of DNA into RNA using the four ribonucleoside triphosphates as substrates. The sequence is that of DNA-directed RNA polymerase subunit beta from Yersinia pseudotuberculosis serotype O:1b (strain IP 31758).